The following is a 1205-amino-acid chain: Solute carrier family 12 member 2 (1205 aa).

Position 1 is an N-acetylmethionine (methionine 1). Residues 1-22 (MEPGPARPRLAPAARPGWGRAA) show a composition bias toward low complexity. The interval 1–102 (MEPGPARPRL…AAAAAAAAAA (102 aa)) is disordered. Residues 1–279 (MEPGPARPRL…AESKGVVKFG (279 aa)) are Cytoplasmic-facing. The span at 23 to 35 (GCRRRGGPARHGR) shows a compositional bias: basic residues. 2 positions are modified to phosphoserine: serine 74 and serine 76. An RFXV motif 1 motif is present at residues 77–80 (RFQV). Positions 87–102 (AGRAAAAAAAAAAAAA) are enriched in low complexity. Positions 133-136 (RFRV) match the RFXV motif 2 motif. Positions 143 to 155 (ASSSADDSLSDAA) are enriched in low complexity. A disordered region spans residues 143 to 187 (ASSSADDSLSDAAGVGGDGPNVSFQNGGDTVLSEGSSLHSGGGSG). Phosphothreonine is present on residues threonine 196, threonine 200, threonine 205, threonine 210, and threonine 223. Serine 235 is subject to Phosphoserine. Phosphothreonine is present on threonine 259. The chain crosses the membrane as a discontinuously helical span at residues 280 to 309 (WIKGVLVRCMLNIWGVMLFIRLSWIVGQAG). Residue leucine 290 participates in Na(+) binding. K(+) contacts are provided by asparagine 291 and isoleucine 292. Na(+) is bound at residue tryptophan 293. 3 residues coordinate chloride: glycine 294, valine 295, and methionine 296. Residues 310 to 329 (IGLSVVVIAMATVVTTITGL) traverse the membrane as a helical segment. At 330–360 (STSAIATNGFVRGGGAYYLISRSLGPEFGGA) the chain is on the cytoplasmic side. A helical membrane pass occupies residues 361 to 388 (IGLIFAFANAVAVAMYVVGFAETVVELL). Phenylalanine 365 contributes to the chloride binding site. Residue tyrosine 376 coordinates K(+). At 389-398 (KEHSILMIDE) the chain is on the extracellular side. A helical membrane pass occupies residues 399-422 (INDIRIIGAITVVILLGISVAGME). The Cytoplasmic segment spans residues 423 to 425 (WEA). A helical membrane pass occupies residues 426-447 (KAQIVLLVILLLAIADFVIGTF). Topologically, residues 448–479 (ISLESKKPKGFFGYKSEIFNENFGPDFREEET) are extracellular. Residues 480–497 (FFSVFAIFFPAATGILAG) form a discontinuously helical membrane-spanning segment. Residues proline 489, alanine 490, and threonine 492 each coordinate K(+). Positions 489 and 490 each coordinate chloride. Chloride is bound by residues glycine 493 and isoleucine 494. At 498–512 (ANISGDLADPQSAIP) the chain is on the cytoplasmic side. The chain crosses the membrane as a helical span at residues 513–534 (KGTLLAILITTVVYIGIAVSVG). Topologically, residues 535-591 (SCVVRDATGNVNDTITTELTNCTSAACKLNFDFSYCESNTCSYGLMNNFQVMSMVSG) are extracellular. Asparagine 546 and asparagine 555 each carry an N-linked (GlcNAc...) asparagine glycan. 2 disulfide bridges follow: cysteine 556–cysteine 561 and cysteine 570–cysteine 575. Residues 592–616 (FAPLISAGIFSATLSSALASLVSAP) form a helical membrane-spanning segment. The Na(+) site is built by alanine 603, serine 606, and serine 607. The Cytoplasmic portion of the chain corresponds to 617 to 644 (KIFQALCKDNIYPAFQMFAKGYGKNNEP). A run of 2 helical transmembrane segments spans residues 645-665 (LRGY…AELN) and 666-684 (VIAP…LINF). Phenylalanine 675 and tyrosine 679 together coordinate chloride. The Cytoplasmic segment spans residues 685 to 707 (SVFHASLAKSPGWRPAFKYYNMW). 2 helical membrane passes run 708-725 (ISLI…VINW) and 726-738 (WAAL…VLGL). At 739-1205 (YIYVTYKKPD…NHQSVLTFYS (467 aa)) the chain is on the cytoplasmic side. Residues 754-771 (STQALTYLSALQHSIRLS) form a scissor helix region. 2 positions are modified to phosphoserine: serine 933 and serine 937. The tract at residues 953–986 (SDQDTCKSSGEKSITQKDEEEDGKTPTQPLLKKE) is disordered. Serine 987 carries the phosphoserine modification.

This sequence belongs to the SLC12A transporter family. In terms of assembly, homodimer; adopts a domain-swap conformation at the scissor helices connecting the transmembrane domain and C-terminal domain. In terms of processing, phosphorylated at Thr-196, Thr-200 and Thr-205 by OXSR1/OSR1 and STK39/SPAK downstream of WNK kinases (WNK1, WNK2, WNK3 or WNK4), promoting its activity. Widely expressed. High expression found in the cochlea, cochlear lateral wall, and the choroid plexus. Lower expression found in the cerebellum and the cortex.

The protein localises to the basolateral cell membrane. The enzyme catalyses K(+)(out) + 2 chloride(out) + Na(+)(out) = K(+)(in) + 2 chloride(in) + Na(+)(in). Activated following phosphorylation by OXSR1/OSR1 and STK39/SPAK downstream of WNK kinases (WNK1, WNK2, WNK3 or WNK4). Inhibited by bumetanide and furosemide. Its function is as follows. Cation-chloride cotransporter which mediates the electroneutral transport of chloride, potassium and/or sodium ions across the membrane. Plays a vital role in the regulation of ionic balance and cell volume. This is Solute carrier family 12 member 2 (Slc12a2) from Mus musculus (Mouse).